A 304-amino-acid chain; its full sequence is Putative HTH-type transcriptional regulatory protein Memar_2347 (304 aa).

Residues Leu132 to Leu189 enclose the HTH cro/C1-type domain. The segment at residues Leu143–Ser162 is a DNA-binding region (H-T-H motif).

The sequence is that of Putative HTH-type transcriptional regulatory protein Memar_2347 from Methanoculleus marisnigri (strain ATCC 35101 / DSM 1498 / JR1).